A 207-amino-acid chain; its full sequence is Ribosomal RNA small subunit methyltransferase G (207 aa).

S-adenosyl-L-methionine contacts are provided by residues glycine 76, glutamine 81, 127–128 (VE), and arginine 141.

The protein belongs to the methyltransferase superfamily. RNA methyltransferase RsmG family.

It is found in the cytoplasm. It catalyses the reaction guanosine(527) in 16S rRNA + S-adenosyl-L-methionine = N(7)-methylguanosine(527) in 16S rRNA + S-adenosyl-L-homocysteine. Its function is as follows. Specifically methylates the N7 position of guanine in position 527 of 16S rRNA. The chain is Ribosomal RNA small subunit methyltransferase G from Neisseria meningitidis serogroup B (strain ATCC BAA-335 / MC58).